We begin with the raw amino-acid sequence, 714 residues long: Ribonucleoside-diphosphate reductase 2 subunit alpha (714 aa).

Substrate is bound by residues threonine 161, 177 to 178 (SC), glycine 206, 386 to 390 (NLCSE), and 588 to 592 (PTGSI). Cysteine 178 and cysteine 415 are joined by a disulfide. The active-site Proton acceptor is the asparagine 386. The Cysteine radical intermediate role is filled by cysteine 388. Glutamate 390 serves as the catalytic Proton acceptor.

Belongs to the ribonucleoside diphosphate reductase large chain family. As to quaternary structure, tetramer of two alpha and two beta subunits.

It carries out the reaction a 2'-deoxyribonucleoside 5'-diphosphate + [thioredoxin]-disulfide + H2O = a ribonucleoside 5'-diphosphate + [thioredoxin]-dithiol. Its activity is regulated as follows. Under complex allosteric control mediated by deoxynucleoside triphosphates and ATP binding. The type of nucleotide bound at the specificity site determines substrate preference. It seems probable that ATP makes the enzyme reduce CDP and UDP, dGTP favors ADP reduction and dTTP favors GDP reduction. Its function is as follows. Provides the precursors necessary for DNA synthesis. Catalyzes the biosynthesis of deoxyribonucleotides from the corresponding ribonucleotides. R1E contains the binding sites for both substrates and allosteric effectors and carries out the actual reduction of the ribonucleotide. This chain is Ribonucleoside-diphosphate reductase 2 subunit alpha (nrdE), found in Escherichia coli (strain K12).